The sequence spans 315 residues: Putative HTH-type transcriptional regulatory protein PH1808 (315 aa).

The HTH cro/C1-type domain maps to 131–189; the sequence is LKALREEHGYSITELAGILGISRKSLQRYEKGESVVSLEVALRLEEVFDEPLVKPIDVL. The segment at residues 142–161 is a DNA-binding region (H-T-H motif); the sequence is ITELAGILGISRKSLQRYEK.

The chain is Putative HTH-type transcriptional regulatory protein PH1808 from Pyrococcus horikoshii (strain ATCC 700860 / DSM 12428 / JCM 9974 / NBRC 100139 / OT-3).